An 825-amino-acid polypeptide reads, in one-letter code: Endoglucanase C (825 aa).

An N-terminal signal peptide occupies residues 1 to 28 (MRNKLRRLLAIMMAVLLITSLFAPMVSA). Glu-219 serves as the catalytic Proton donor. Catalysis depends on Glu-335, which acts as the Nucleophile. Basic and acidic residues predominate over residues 607–621 (DRESVPEPVEHDTKG). The interval 607 to 635 (DRESVPEPVEHDTKGDSALPSDFEDGTRQ) is disordered.

This sequence belongs to the glycosyl hydrolase 5 (cellulase A) family.

It catalyses the reaction Endohydrolysis of (1-&gt;4)-beta-D-glucosidic linkages in cellulose, lichenin and cereal beta-D-glucans.. This is Endoglucanase C (celC) from Evansella cellulosilytica (strain ATCC 21833 / DSM 2522 / FERM P-1141 / JCM 9156 / N-4) (Bacillus cellulosilyticus).